The primary structure comprises 732 residues: MNVNSSAFERTNRFPSFPVLKDDQKTSSDSIAAAKKKDLLSLISSKSLLSSETLGWFSVICAFSITGSGLEVNTMSIPFYLIFGIFAFVSFTTQYLGIYSFSFQPFQLLNVIIASLSMVFITLGAFVLGTLDTTCLLLLAFKLFFIRNDPTPFNARSANLKNYIAFPICLFVINHILILLGYFQCSYSVFYASVFYILLGVFIRVFYLVNKEKFEKKELAFLFSSIVVACLIQFNVLPLGTINLSVTRFTILCFMQIFCINWDGIARIQFYLGKFDISLIMALISAIINKTASQNSIKIISCLYQVGFCFFKIGSSITANLKLPDNSRIYRLYNDFIVNGVLADKESRSIFYFFLLNVSYMFVQVIYGLWTNSLGLISDAIHMAFDCIAILVGLVATTLAKMPLNYAYPFGFAKIEALSGFTNGIFLVLISFSIVGEALYRLFHPPQMNTDQLLLVSFLGLVVNLVGILAFNHGHNHDHGSHHHHSHSNHSMCLPNTTNDINIFEEFEEEKDNVEAQKMGYTNDDHVSQHEHTHENSQEHHHEHNHNHDHIHKYNEKCDHESISLQNLDNDHHCHHHHENHNMHGIFLHIIADTMGSVGVIVSTILIQWFSWTGFDPLASLIIAALIFVSVLPLIKDSAKNLLSVTDPESEYLLKQCLSNISLSNSVISLSNPKFWTNERGEVYGILHIQVSIDGDLNVVRNEVFRKLSIAVPNLKHICIQSERPNNCWCGK.

Transmembrane regions (helical) follow at residues 52 to 72 (ETLG…GLEV), 79 to 99 (FYLI…LGIY), 111 to 131 (VIIA…LGTL), 163 to 183 (YIAF…LGYF), 189 to 209 (VFYA…FYLV), 219 to 239 (LAFL…VLPL), 240 to 260 (GTIN…IFCI), 268 to 288 (IQFY…SAII), 350 to 370 (IFYF…YGLW), 380 to 400 (AIHM…TTLA), 415 to 435 (IEAL…FSIV), and 453 to 473 (LLLV…AFNH). Positions 526-547 (HVSQHEHTHENSQEHHHEHNHN) are disordered. 2 helical membrane passes run 586 to 606 (IFLH…STIL) and 615 to 635 (FDPL…LPLI).

This sequence belongs to the cation diffusion facilitator (CDF) transporter (TC 2.A.4) family. SLC30A subfamily. Interacts with zrg17.

The protein resides in the endoplasmic reticulum membrane. Its subcellular location is the golgi apparatus. The protein localises to the cis-Golgi network membrane. Functionally, probable zinc transporter involved in Golgi membrane trafficking through the regulation of zinc homeostasis. This is Probable zinc transporter cis4 (cis4) from Schizosaccharomyces pombe (strain 972 / ATCC 24843) (Fission yeast).